We begin with the raw amino-acid sequence, 1325 residues long: Nonribosomal peptide synthetase (1325 aa).

The segment at 248–644 is adenylation; sequence YQQLDRLSTR…LGEIEYQIQQ (397 aa). A Carrier domain is found at 779 to 856; sequence EIVNPGEITL…DQARLLRPLS (78 aa). An O-(pantetheine 4'-phosphoryl)serine modification is found at Ser816. The condensation stretch occupies residues 893-1310; sequence EDVYPCTPLQ…DDYSTTLHTL (418 aa).

The protein belongs to the NRP synthetase family. Requires pantetheine 4'-phosphate as cofactor.

Its pathway is antifungal biosynthesis. In terms of biological role, nonribosomal peptide synthetase; part of the gene cluster that mediates the biosynthesis of the tetrahydropyranyl antifungal agent lanomycin that acts as an inhibitor of CYP51 and blocks the ergosterol biosynthesis. The biosynthesis probably begins with the formation of an hexaketide, followed by methionine mediated alkylation of C-2 and C-6, and methylation of the reduced C-3 oxygen, pyran forming reductive ring closure, oxygenation of C-4, beta-keto reduction, enoyl reduction and dehydration of the remaining oxygens, and finally, acylation with glycine to complete the biosynthesis. This Pyrenophora dematioidea (Helminthosporium dematioideum) protein is Nonribosomal peptide synthetase.